The following is a 535-amino-acid chain: Large neutral amino acids transporter small subunit 2 (535 aa).

Residues 1–17 (MEEGARHRNNTEKKHPG) are compositionally biased toward basic and acidic residues. Residues 1 to 30 (MEEGARHRNNTEKKHPGGGESDASPEAGSG) form a disordered region. The Cytoplasmic segment spans residues 1–44 (MEEGARHRNNTEKKHPGGGESDASPEAGSGGGGVALKKEIGLVS). Ser29 is subject to Phosphoserine. The helical transmembrane segment at 45–65 (ACGIIVGNIIGSGIFVSPKGV) threads the bilayer. Position 53 (Ile53) interacts with L-leucine. The Extracellular portion of the chain corresponds to 66 to 73 (LENAGSVG). A helical membrane pass occupies residues 74-95 (LALIVWIVTGFITVVGALCYAE). At 96–116 (LGVTIPKSGGDYSYVKDIFGG) the chain is on the cytoplasmic side. A helical membrane pass occupies residues 117 to 149 (LAGFLRLWIAVLVIYPTNQAVIALTFSNYVLQP). Asn134 is a binding site for L-tryptophan. The Extracellular segment spans residues 150–157 (LFPTCFPP). The helical transmembrane segment at 158 to 178 (ESGLRLLAAICLLLLTWVNCS) threads the bilayer. Residues 179-181 (SVR) are Cytoplasmic-facing. Residues 182 to 210 (WATRVQDIFTAGKLLALALIIIMGIVQIC) traverse the membrane as a helical segment. At 211-230 (KGEYFWLEPKNAFENFQEPD) the chain is on the extracellular side. A helical transmembrane segment spans residues 231–252 (IGLVALAFLQGSFAYGGWNFLN). Residue Gly246 participates in L-leucine binding. At 253–265 (YVTEELVDPYKNL) the chain is on the cytoplasmic side. A helical membrane pass occupies residues 266–287 (PRAIFISIPLVTFVYVFANVAY). Residues 288–312 (VTAMSPQELLASNAVAVTFGEKLLG) lie on the Extracellular side of the membrane. A helical membrane pass occupies residues 313-338 (VMAWIMPISVALSTFGGVNGSLFTSS). The Cytoplasmic portion of the chain corresponds to 339–364 (RLFFAGAREGHLPSVLAMIHVKRCTP). The helical transmembrane segment at 365–382 (IPALLFTCISTLLMLVTS) threads the bilayer. At 383-386 (DMYT) the chain is on the extracellular side. A helical transmembrane segment spans residues 387 to 408 (LINYVGFINYLFYGVTVAGQIV). Asn395 contributes to the L-tryptophan binding site. The Cytoplasmic portion of the chain corresponds to 409-423 (LRWKKPDIPRPIKIN). The next 2 helical transmembrane spans lie at 424 to 446 (LLFP…WSEP) and 447 to 466 (VVCG…YFLG). Residues 467-535 (VYWQHKPKCF…DKDVAGQPQP (69 aa)) lie on the Cytoplasmic side of the membrane. Residues 502–535 (SGTEEANEDMEEQQQPMYQPTPTKDKDVAGQPQP) are disordered. Positions 514–523 (QQQPMYQPTP) are enriched in polar residues.

It belongs to the amino acid-polyamine-organocation (APC) superfamily. L-type amino acid transporter (LAT) (TC 2.A.3.8) family. As to quaternary structure, disulfide-linked heterodimer composed of the catalytic light chain subunit SLC7A8 and the heavy chain subunit SLC3A2. SLC3A2 acts as chaperones for correct plasma membrane trafficking and stabilization of SLC7A8 and modulates the substrate affinity and specificity of SLC7A8. ICAM-1 associates with the heterodimer SLC3A2/SLC7A8; this interaction regulates SLC7A8 activity. As to expression, strongest expression is observed in kidney and moderate expression in placenta and brain, followed by liver, prostate, testis, ovary, lymph node, thymus, spleen, skeletal muscle and heart. Also expressed in fetal liver as well as in the retinal pigment epithelial cell line ARPE-19 and the intestinal epithelial cell line Caco-2.

The protein resides in the cell membrane. The protein localises to the basolateral cell membrane. It catalyses the reaction L-histidine(in) + L-phenylalanine(out) = L-histidine(out) + L-phenylalanine(in). The catalysed reaction is L-tryptophan(in) + L-phenylalanine(out) = L-tryptophan(out) + L-phenylalanine(in). The enzyme catalyses L-isoleucine(in) + L-phenylalanine(out) = L-isoleucine(out) + L-phenylalanine(in). It carries out the reaction L-valine(in) + L-phenylalanine(out) = L-valine(out) + L-phenylalanine(in). It catalyses the reaction L-leucine(in) + L-phenylalanine(out) = L-leucine(out) + L-phenylalanine(in). The catalysed reaction is L-glutamine(in) + L-phenylalanine(out) = L-glutamine(out) + L-phenylalanine(in). The enzyme catalyses L-cysteine(in) + L-phenylalanine(out) = L-cysteine(out) + L-phenylalanine(in). It carries out the reaction L-phenylalanine(out) + L-methionine(in) = L-phenylalanine(in) + L-methionine(out). It catalyses the reaction L-leucine(out) + L-methionine(in) = L-leucine(in) + L-methionine(out). The catalysed reaction is L-cysteine(out) + L-methionine(in) = L-cysteine(in) + L-methionine(out). The enzyme catalyses S-methylmercury-L-cysteine(out) + L-methionine(in) = S-methylmercury-L-cysteine(in) + L-methionine(out). It carries out the reaction S-methylmercury-L-cysteine(in) + L-leucine(out) = S-methylmercury-L-cysteine(out) + L-leucine(in). It catalyses the reaction S-methylmercury-L-cysteine(in) + L-phenylalanine(out) = S-methylmercury-L-cysteine(out) + L-phenylalanine(in). The catalysed reaction is L-phenylalanine(out) + L-serine(in) = L-phenylalanine(in) + L-serine(out). The enzyme catalyses L-phenylalanine(out) + glycine(in) = L-phenylalanine(in) + glycine(out). It carries out the reaction L-phenylalanine(out) + L-alanine(in) = L-phenylalanine(in) + L-alanine(out). It catalyses the reaction 3,3'-diiodo-L-thyronine(out) = 3,3'-diiodo-L-thyronine(in). The catalysed reaction is 3,3',5-triiodo-L-thyronine(out) = 3,3',5-triiodo-L-thyronine(in). The enzyme catalyses L-dopa(out) + L-phenylalanine(in) = L-dopa(in) + L-phenylalanine(out). Inhibited by the L-type inhibitor 2-Aminobicyclo-(2,2,1)-heptane-2-carboxylic acid (BCH). Associates with SLC3A2 to form a functional heterodimeric complex that translocates small and large neutral amino acids with broad specificity and a stoichiometry of 1:1. Functions as amino acid antiporter mediating the influx of extracellular essential amino acids mainly in exchange with the efflux of highly concentrated intracellular amino acids. Has relatively symmetrical selectivities but strongly asymmetrical substrate affinities at both the intracellular and extracellular sides of the transporter. This asymmetry allows SLC7A8 to regulate intracellular amino acid pools (mM concentrations) by exchange with external amino acids (uM concentration range), equilibrating the relative concentrations of different amino acids across the plasma membrane instead of mediating their net uptake. May play an essential role in the reabsorption of neutral amino acids from the epithelial cells to the bloodstream in the kidney. Involved in the uptake of methylmercury (MeHg) when administered as the L-cysteine or D,L-homocysteine complexes, and hence plays a role in metal ion homeostasis and toxicity. Involved in the cellular activity of small molecular weight nitrosothiols, via the stereoselective transport of L-nitrosocysteine (L-CNSO) across the transmembrane. Imports the thyroid hormone diiodothyronine (T2) and to a smaller extent triiodothyronine (T3) but not rT 3 or thyroxine (T4). Mediates the uptake of L-DOPA. May participate in auditory function. The protein is Large neutral amino acids transporter small subunit 2 of Homo sapiens (Human).